The primary structure comprises 74 residues: Conotoxin SIIID (74 aa).

Residues 1–20 (MMSKLGVLLTVCLLLFPLTA) form the signal peptide. A propeptide spanning residues 21 to 53 (LPLDGDQPADQLEDRMQDDISSEQYPSFVRRQK) is cleaved from the precursor. Cystine bridges form between C54-C71, C55-C73, and C61-C74.

Belongs to the conotoxin M superfamily. Three disulfide isomers have been synthesized and tested. SIIID with the disulfide pairing 1-4;2-5;3-6 is the most active. Expressed by the venom duct.

It is found in the secreted. In terms of biological role, the short synthetic peptide SIIID (range 54-74, with disulfide pairing 1-4, 2-5 and 3-6) reversibly inhibits human alpha-7/CHRNA7 acetylcholine receptor (IC(50)=880 nM). Shows a paralytic effect in fish. This Conus striatus (Striated cone) protein is Conotoxin SIIID.